Consider the following 466-residue polypeptide: 3-isopropylmalate dehydratase large subunit (466 aa).

The [4Fe-4S] cluster site is built by C347, C407, and C410.

It belongs to the aconitase/IPM isomerase family. LeuC type 1 subfamily. Heterodimer of LeuC and LeuD. The cofactor is [4Fe-4S] cluster.

The enzyme catalyses (2R,3S)-3-isopropylmalate = (2S)-2-isopropylmalate. It participates in amino-acid biosynthesis; L-leucine biosynthesis; L-leucine from 3-methyl-2-oxobutanoate: step 2/4. In terms of biological role, catalyzes the isomerization between 2-isopropylmalate and 3-isopropylmalate, via the formation of 2-isopropylmaleate. This Acidiphilium cryptum (strain JF-5) protein is 3-isopropylmalate dehydratase large subunit.